A 150-amino-acid chain; its full sequence is Endoribonuclease YbeY (150 aa).

Zn(2+) is bound by residues histidine 112, histidine 116, and histidine 122.

Belongs to the endoribonuclease YbeY family. It depends on Zn(2+) as a cofactor.

It localises to the cytoplasm. In terms of biological role, single strand-specific metallo-endoribonuclease involved in late-stage 70S ribosome quality control and in maturation of the 3' terminus of the 16S rRNA. This Bdellovibrio bacteriovorus (strain ATCC 15356 / DSM 50701 / NCIMB 9529 / HD100) protein is Endoribonuclease YbeY.